We begin with the raw amino-acid sequence, 143 residues long: Interleukin-3 (143 aa).

The first 23 residues, 1 to 23, serve as a signal peptide directing secretion; that stretch reads MSSFPILHLLLLLLGCQVPQAQG. N-linked (GlcNAc...) asparagine glycosylation is present at Asn-79.

The protein belongs to the IL-3 family. In terms of assembly, monomer.

The protein localises to the secreted. Granulocyte/macrophage colony-stimulating factors are cytokines that act in hematopoiesis by controlling the production, differentiation, and function of 2 related white cell populations of the blood, the granulocytes and the monocytes-macrophages. In terms of biological role, this CSF induces granulocytes, macrophages, mast cells, stem cells, erythroid cells, eosinophils and megakaryocytes. The chain is Interleukin-3 (IL3) from Canis lupus familiaris (Dog).